A 1183-amino-acid polypeptide reads, in one-letter code: DNA-directed RNA polymerase subunit beta (1183 aa).

It belongs to the RNA polymerase beta chain family. In terms of assembly, the RNAP catalytic core consists of 2 alpha, 1 beta, 1 beta' and 1 omega subunit. When a sigma factor is associated with the core the holoenzyme is formed, which can initiate transcription.

It catalyses the reaction RNA(n) + a ribonucleoside 5'-triphosphate = RNA(n+1) + diphosphate. DNA-dependent RNA polymerase catalyzes the transcription of DNA into RNA using the four ribonucleoside triphosphates as substrates. The polypeptide is DNA-directed RNA polymerase subunit beta (Staphylococcus aureus (strain Mu50 / ATCC 700699)).